The primary structure comprises 364 residues: Large ribosomal subunit protein bL27m (364 aa).

The N-terminal 19 residues, 1 to 19 (MFSSSWQQVPKFVVQQVRT), are a transit peptide targeting the mitochondrion.

It belongs to the bacterial ribosomal protein bL27 family.

It is found in the mitochondrion. Its function is as follows. Component of the large subunit of mitochondrial ribosome. The protein is Large ribosomal subunit protein bL27m (MRPL2) of Kluyveromyces lactis (strain ATCC 8585 / CBS 2359 / DSM 70799 / NBRC 1267 / NRRL Y-1140 / WM37) (Yeast).